A 273-amino-acid polypeptide reads, in one-letter code: Serine acetyltransferase (273 aa).

It belongs to the transferase hexapeptide repeat family. Homohexamer. Dimer of a homotrimer.

The protein resides in the cytoplasm. The catalysed reaction is L-serine + acetyl-CoA = O-acetyl-L-serine + CoA. Its pathway is amino-acid biosynthesis; L-cysteine biosynthesis; L-cysteine from L-serine: step 1/2. The chain is Serine acetyltransferase (cysE) from Shigella flexneri.